Here is a 254-residue protein sequence, read N- to C-terminus: 5-oxoprolinase subunit A (254 aa).

The protein belongs to the LamB/PxpA family. Forms a complex composed of PxpA, PxpB and PxpC.

It carries out the reaction 5-oxo-L-proline + ATP + 2 H2O = L-glutamate + ADP + phosphate + H(+). In terms of biological role, catalyzes the cleavage of 5-oxoproline to form L-glutamate coupled to the hydrolysis of ATP to ADP and inorganic phosphate. The chain is 5-oxoprolinase subunit A from Heliobacterium modesticaldum (strain ATCC 51547 / Ice1).